A 488-amino-acid polypeptide reads, in one-letter code: Glutamate--tRNA ligase (488 aa).

Residues 11 to 21 carry the 'HIGH' region motif; sequence PSPTGQIHIGN. Zn(2+) is bound by residues Cys108, Cys110, Cys135, and Asp137. The short motif at 252 to 256 is the 'KMSKS' region element; the sequence is KLSKR. Lys255 contacts ATP.

Belongs to the class-I aminoacyl-tRNA synthetase family. Glutamate--tRNA ligase type 1 subfamily. In terms of assembly, monomer. It depends on Zn(2+) as a cofactor.

The protein resides in the cytoplasm. It carries out the reaction tRNA(Glu) + L-glutamate + ATP = L-glutamyl-tRNA(Glu) + AMP + diphosphate. In terms of biological role, catalyzes the attachment of glutamate to tRNA(Glu) in a two-step reaction: glutamate is first activated by ATP to form Glu-AMP and then transferred to the acceptor end of tRNA(Glu). This is Glutamate--tRNA ligase from Natranaerobius thermophilus (strain ATCC BAA-1301 / DSM 18059 / JW/NM-WN-LF).